Here is a 557-residue protein sequence, read N- to C-terminus: Arginine--tRNA ligase (557 aa).

A 'HIGH' region motif is present at residues 132-142; that stretch reads ANPTGNLHLGH.

Belongs to the class-I aminoacyl-tRNA synthetase family. As to quaternary structure, monomer.

The protein localises to the cytoplasm. The catalysed reaction is tRNA(Arg) + L-arginine + ATP = L-arginyl-tRNA(Arg) + AMP + diphosphate. This Geobacillus thermodenitrificans (strain NG80-2) protein is Arginine--tRNA ligase.